Consider the following 512-residue polypeptide: Cytochrome P450 77A4 (512 aa).

Residues Pro9 to Thr29 traverse the membrane as a helical segment. Cys456 is a heme binding site.

It belongs to the cytochrome P450 family. Heme serves as cofactor.

Its subcellular location is the membrane. Catalyzes the epoxidation of physiological unsaturated fatty acids in vitro. Can use laurate, oleate, linoleate, linolenate and vernolate as substrate. The protein is Cytochrome P450 77A4 (CYP77A4) of Arabidopsis thaliana (Mouse-ear cress).